Here is a 947-residue protein sequence, read N- to C-terminus: Protein RRC1-like (947 aa).

Residues 1–11 show a composition bias toward basic and acidic residues; sequence MVKDEFFLDHP. Disordered regions lie at residues 1–35 and 63–167; these read MVKD…RMKQ and PNDN…DELP. A compositionally biased stretch (basic residues) spans 12–34; sequence GRKHRSRNTEKKKKPRRRERRMK. Basic and acidic residues-rich tracts occupy residues 66 to 84 and 104 to 155; these read NKLK…DSIS and KGPE…DHNS. The RRM domain occupies 187–268; sequence TNLYVVNLSS…YELKIGWGKV (82 aa). One copy of the SURP motif repeat lies at 336–379; it reads IIDTMALNVLDGGCAFEQAIMERGRGNPLFNFLFELGSKEHTYY. Residues 412 to 434 form a disordered region; it reads PPLPATRSPEHGKESRGTYAAGK. One can recognise a CID domain in the interval 444 to 589; sequence LTDSQRDEFE…GLRATFLRSR (146 aa). The SAP domain occupies 638–672; it reads LMNRPISELERRCRHNGLSLLGGREMMVARLVCLK. Disordered regions lie at residues 752–797 and 846–947; these read REDD…PENE and GLSG…RGMR. Basic and acidic residues-rich tracts occupy residues 854 to 876, 888 to 916, and 924 to 947; these read LPEK…RSES, LTRE…LDKD, and SSRE…RGMR.

Expressed in leaves, inflorescence stems, roots, flower buds, open flowers and siliques.

Its function is as follows. Probable SR-like splicing factor. The polypeptide is Protein RRC1-like (Arabidopsis thaliana (Mouse-ear cress)).